A 256-amino-acid polypeptide reads, in one-letter code: Ribosomal RNA small subunit methyltransferase J (256 aa).

Residues 101 to 102 (RD), 117 to 118 (ER), and Asp174 contribute to the S-adenosyl-L-methionine site.

The protein belongs to the methyltransferase superfamily. RsmJ family.

It localises to the cytoplasm. The enzyme catalyses guanosine(1516) in 16S rRNA + S-adenosyl-L-methionine = N(2)-methylguanosine(1516) in 16S rRNA + S-adenosyl-L-homocysteine + H(+). In terms of biological role, specifically methylates the guanosine in position 1516 of 16S rRNA. The sequence is that of Ribosomal RNA small subunit methyltransferase J from Chromohalobacter salexigens (strain ATCC BAA-138 / DSM 3043 / CIP 106854 / NCIMB 13768 / 1H11).